The sequence spans 422 residues: UDP-N-acetylglucosamine 1-carboxyvinyltransferase (422 aa).

22 to 23 (KN) is a phosphoenolpyruvate binding site. R93 provides a ligand contact to UDP-N-acetyl-alpha-D-glucosamine. The active-site Proton donor is the C117. C117 carries the 2-(S-cysteinyl)pyruvic acid O-phosphothioketal modification. Residues 122 to 126 (RPVDL), 162 to 165 (KVSV), D307, and I329 contribute to the UDP-N-acetyl-alpha-D-glucosamine site.

This sequence belongs to the EPSP synthase family. MurA subfamily.

The protein resides in the cytoplasm. It carries out the reaction phosphoenolpyruvate + UDP-N-acetyl-alpha-D-glucosamine = UDP-N-acetyl-3-O-(1-carboxyvinyl)-alpha-D-glucosamine + phosphate. It participates in cell wall biogenesis; peptidoglycan biosynthesis. Its function is as follows. Cell wall formation. Adds enolpyruvyl to UDP-N-acetylglucosamine. The polypeptide is UDP-N-acetylglucosamine 1-carboxyvinyltransferase (Hamiltonella defensa subsp. Acyrthosiphon pisum (strain 5AT)).